The following is a 254-amino-acid chain: Glucosamine-6-phosphate deaminase (254 aa).

Residue Asp63 is the Proton acceptor; for enolization step of the active site. Asn129 serves as the catalytic For ring-opening step. The active-site Proton acceptor; for ring-opening step is His131. The active-site For ring-opening step is Glu136.

It belongs to the glucosamine/galactosamine-6-phosphate isomerase family. NagB subfamily.

The enzyme catalyses alpha-D-glucosamine 6-phosphate + H2O = beta-D-fructose 6-phosphate + NH4(+). It participates in amino-sugar metabolism; N-acetylneuraminate degradation; D-fructose 6-phosphate from N-acetylneuraminate: step 5/5. Catalyzes the reversible isomerization-deamination of glucosamine 6-phosphate (GlcN6P) to form fructose 6-phosphate (Fru6P) and ammonium ion. This is Glucosamine-6-phosphate deaminase from Exiguobacterium sp. (strain ATCC BAA-1283 / AT1b).